An 861-amino-acid polypeptide reads, in one-letter code: Probable beta-glucosidase A (861 aa).

The signal sequence occupies residues 1 to 19 (MKLSILEAAALTAASVASA). N-linked (GlcNAc...) asparagine glycosylation is found at N62, N212, and N253. The active site involves D281. N316, N323, N355, N524, N543, N565, N669, and N713 each carry an N-linked (GlcNAc...) asparagine glycan. The tract at residues 735 to 754 (PEGATDGSPQPRLPASGGPG) is disordered.

Belongs to the glycosyl hydrolase 3 family.

It localises to the secreted. It carries out the reaction Hydrolysis of terminal, non-reducing beta-D-glucosyl residues with release of beta-D-glucose.. It functions in the pathway glycan metabolism; cellulose degradation. Beta-glucosidases are one of a number of cellulolytic enzymes involved in the degradation of cellulosic biomass. Catalyzes the last step releasing glucose from the inhibitory cellobiose. In Aspergillus terreus, this protein is Probable beta-glucosidase A (bglA).